We begin with the raw amino-acid sequence, 181 residues long: Protein Syd (181 aa).

This sequence belongs to the Syd family.

Its subcellular location is the cell inner membrane. In terms of biological role, interacts with the SecY protein in vivo. May bind preferentially to an uncomplexed state of SecY, thus functioning either as a chelating agent for excess SecY in the cell or as a regulatory factor that negatively controls the translocase function. The polypeptide is Protein Syd (Escherichia coli O157:H7).